Here is a 360-residue protein sequence, read N- to C-terminus: sn-glycerol-3-phosphate import ATP-binding protein UgpC (360 aa).

Residues 4-235 (LSLKGVRKSY…PATTFVASFI (232 aa)) enclose the ABC transporter domain. An ATP-binding site is contributed by 37-44 (GPSGCGKS).

Belongs to the ABC transporter superfamily. sn-glycerol-3-phosphate importer (TC 3.A.1.1.3) family. As to quaternary structure, the complex is composed of two ATP-binding proteins (UgpC), two transmembrane proteins (UgpA and UgpE) and a solute-binding protein (UgpB).

It localises to the cell inner membrane. It carries out the reaction sn-glycerol 3-phosphate(out) + ATP + H2O = sn-glycerol 3-phosphate(in) + ADP + phosphate + H(+). In terms of biological role, part of the ABC transporter complex UgpBAEC involved in sn-glycerol-3-phosphate (G3P) import. Responsible for energy coupling to the transport system. The protein is sn-glycerol-3-phosphate import ATP-binding protein UgpC of Burkholderia pseudomallei (strain K96243).